The sequence spans 964 residues: Syndetin (964 aa).

N-acetylmethionine is present on Met-1. Residues 1–25 are disordered; the sequence is MQKIKSLMTRQGLKSPPESLNDLGA. The residue at position 15 (Ser-15) is a Phosphoserine. 2 coiled-coil regions span residues 81-107 and 216-244; these read LNLQ…VADL and YSCI…LSKI. A phosphoserine mark is found at Ser-494, Ser-498, Ser-559, and Ser-561. Positions 532–563 are disordered; that stretch reads DEETEDVLASNGYESDEQEKSAYQDYDSDSDV. A Glycyl lysine isopeptide (Lys-Gly) (interchain with G-Cter in SUMO1); alternate cross-link involves residue Lys-963. Lys-963 is covalently cross-linked (Glycyl lysine isopeptide (Lys-Gly) (interchain with G-Cter in SUMO2); alternate).

The protein belongs to the syndetin family. Component of the endosome-associated retrograde protein (EARP) complex, composed of VPS51, VPS52, VPS53 and VPS50/Syndetin. The EARP complex interacts with EIPR1. Interacts with VPS51 and VPS53 in an EIPR1-independent manner. Expressed in the brain (at protein level).

Its subcellular location is the recycling endosome. It localises to the membrane. In terms of biological role, acts as a component of the EARP complex that is involved in endocytic recycling. The EARP complex associates with Rab4-positive endosomes and promotes recycling of internalized transferrin receptor (TFRC) to the plasma membrane. Within the EARP complex, required to tether the complex to recycling endosomes. Not involved in retrograde transport from early and late endosomes to the trans-Golgi network (TGN). In Rattus norvegicus (Rat), this protein is Syndetin.